We begin with the raw amino-acid sequence, 415 residues long: Serine hydroxymethyltransferase 2 (415 aa).

Residues L121 and 125 to 127 contribute to the (6S)-5,6,7,8-tetrahydrofolate site; that span reads GHL. K229 bears the N6-(pyridoxal phosphate)lysine mark.

It belongs to the SHMT family. Homodimer. Pyridoxal 5'-phosphate is required as a cofactor.

Its subcellular location is the cytoplasm. The enzyme catalyses (6R)-5,10-methylene-5,6,7,8-tetrahydrofolate + glycine + H2O = (6S)-5,6,7,8-tetrahydrofolate + L-serine. The protein operates within one-carbon metabolism; tetrahydrofolate interconversion. It participates in amino-acid biosynthesis; glycine biosynthesis; glycine from L-serine: step 1/1. In terms of biological role, catalyzes the reversible interconversion of serine and glycine with tetrahydrofolate (THF) serving as the one-carbon carrier. This reaction serves as the major source of one-carbon groups required for the biosynthesis of purines, thymidylate, methionine, and other important biomolecules. Also exhibits THF-independent aldolase activity toward beta-hydroxyamino acids, producing glycine and aldehydes, via a retro-aldol mechanism. This is Serine hydroxymethyltransferase 2 from Bordetella parapertussis (strain 12822 / ATCC BAA-587 / NCTC 13253).